The following is a 150-amino-acid chain: Large ribosomal subunit protein uL15 (150 aa).

Residues 18 to 43 (IVGRGSSSGWGKTSGKGHKGQQARSG) are disordered.

This sequence belongs to the universal ribosomal protein uL15 family. In terms of assembly, part of the 50S ribosomal subunit.

Functionally, binds to the 23S rRNA. The polypeptide is Large ribosomal subunit protein uL15 (Treponema denticola (strain ATCC 35405 / DSM 14222 / CIP 103919 / JCM 8153 / KCTC 15104)).